We begin with the raw amino-acid sequence, 251 residues long: Triosephosphate isomerase (251 aa).

Residue 9–11 coordinates substrate; the sequence is NWK. His95 (electrophile) is an active-site residue. Glu167 serves as the catalytic Proton acceptor. Residues Gly173, Ser213, and 234 to 235 contribute to the substrate site; that span reads GG.

It belongs to the triosephosphate isomerase family. Homodimer.

Its subcellular location is the cytoplasm. The catalysed reaction is D-glyceraldehyde 3-phosphate = dihydroxyacetone phosphate. It participates in carbohydrate biosynthesis; gluconeogenesis. The protein operates within carbohydrate degradation; glycolysis; D-glyceraldehyde 3-phosphate from glycerone phosphate: step 1/1. Functionally, involved in the gluconeogenesis. Catalyzes stereospecifically the conversion of dihydroxyacetone phosphate (DHAP) to D-glyceraldehyde-3-phosphate (G3P). The chain is Triosephosphate isomerase from Lactobacillus gasseri (strain ATCC 33323 / DSM 20243 / BCRC 14619 / CIP 102991 / JCM 1131 / KCTC 3163 / NCIMB 11718 / NCTC 13722 / AM63).